Here is a 769-residue protein sequence, read N- to C-terminus: P-selectin (769 aa).

A signal peptide spans 1–32; sequence MASCPKAIWSWRFQRVVFRSVQLLCFSILIFE. Residues 33–717 lie on the Extracellular side of the membrane; that stretch reads LMTQKEVSAW…QEALTYIGGA (685 aa). Residues N54 and N80 are each glycosylated (N-linked (GlcNAc...) asparagine). A C-type lectin domain is found at 58-158; it reads AFCQKYYTDL…PCGKRKRALC (101 aa). 21 cysteine pairs are disulfide-bonded: C60–C158, C131–C150, C163–C174, C168–C183, C185–C194, C200–C244, C230–C257, C262–C306, C292–C319, C324–C368, C354–C381, C386–C430, C416–C443, C448–C492, C478–C505, C510–C554, C540–C567, C581–C625, C611–C638, C643–C687, and C673–C700. Residues E121, N123, and N124 each coordinate Ca(2+). N123 lines the a carbohydrate pocket. Residues E133 and N146 each contribute to the a carbohydrate site. 2 residues coordinate Ca(2+): N146 and D147. An EGF-like domain is found at 159–195; it reads YRASCQDMSCSKQGECIETIGNYTCSCYPGFYGPECE. N-linked (GlcNAc...) asparagine glycosylation occurs at N180. Sushi domains are found at residues 198-259, 260-321, 322-383, 384-445, 446-507, 508-569, 579-640, and 641-702; these read RECG…QCVA, VQCP…VCKA, IACE…VCQA, LQCQ…ECQA, VTCA…TCEA, SKCP…SCKV, LRCP…TCRA, and VKCS…TCQA. 2 N-linked (GlcNAc...) asparagine glycosylation sites follow: N212 and N219. Residue N347 is glycosylated (N-linked (GlcNAc...) asparagine). N-linked (GlcNAc...) asparagine glycosylation is present at N398. N604 carries an N-linked (GlcNAc...) asparagine glycan. N-linked (GlcNAc...) asparagine glycans are attached at residues N655, N662, and N680. Residues 718–734 form a helical membrane-spanning segment; that stretch reads AAGTTGLVTSSILLALL. Topologically, residues 735–769 are cytoplasmic; the sequence is RRRRRQKDDGKSPLNPQSHLGTYGVFTNAAFDPSP. Residues 740–769 form a disordered region; the sequence is QKDDGKSPLNPQSHLGTYGVFTNAAFDPSP. The short motif at 757–760 is the Endocytosis signal element; it reads YGVF. Positions 760–769 are interaction with SNX17; sequence FTNAAFDPSP.

The protein belongs to the selectin/LECAM family. Interacts with SNX17. Interacts with SELPLG/PSGL1 and PODXL2 and mediates neutrophil adhesion and leukocyte rolling. This interaction requires the sialyl-Lewis X epitope of SELPLG and PODXL2, and specific tyrosine sulfation on SELPLG. Interacts (via C-type lectin domain) with alpha-IIb/beta3 integrin ITGA2B:ITGB3 and alpha-V/beta-3 integrin ITGAV:ITGB3. Interacts with alpha5/beta1 integrin ITGA5:ITGB1 and alpha4/beta1 integrin ITGA4:ITGB.

It is found in the cell membrane. Its function is as follows. Ca(2+)-dependent receptor for myeloid cells that binds to carbohydrates on neutrophils and monocytes. Mediates the interaction of activated endothelial cells or platelets with leukocytes. The ligand recognized is sialyl-Lewis X. Mediates rapid rolling of leukocyte rolling over vascular surfaces during the initial steps in inflammation through interaction with SELPLG. Mediates cell-cell interactions and cell adhesion via the interaction with integrin alpha-IIb/beta3 (ITGA2B:ITGB3) and integrin alpha-V/beta-3 (ITGAV:ITGB3). In Ovis aries (Sheep), this protein is P-selectin (SELP).